Here is a 1049-residue protein sequence, read N- to C-terminus: MATTRKLVVEVVDAKDLTPKDGHGTSSPYVVLDYYGQRRRTRTIVRDLNPVWNETLEFSLAKRPSHQLFTDVLELDMYHDKNFGQTRRNNFLGRIRLGSDQFVGQGEEALIYYPLEKKSLFNLVQGEIGLRVYYADEKPPPLKPTVAPLETVVEEKTEETKAEGPDESKPPPETNDIPAEVKETVKPPQPPPEESSPAEGPKPDEEASPPLQENATVGGEEPPASESDKNEAEAKPVEEPPQNQPDGEDIVLESEDTMSWASAPRSPLPEVIISRSVSGSIPETKNGPQPLRRSVSETASYTSEISDVSTIERSTFDLVEKMHYVFIRVVKARSLPTSGSPVTKISLSGTMIQSKPARKTSCFEWDQTFAFLRDSPDLSSSPILEISVWDSSTGIETSQFLGGICFDVSEIPLRDPPDSPLAPQWYRLEGGGAHNSDLMLATWTGTQADESFPDAWKTDTAGNVTARAKVYMSSKLWYLRATVIEAQDLLPPQLTAFKEASFQLKAQLGSQVQKTKSAVTRNGAPSWNEDLLFVAAEPFSDQLVFTLEYRTSKGPVTVGMARVPLSAIERRVDDRLVASRWLGLEDPNDEKRGNRSRVHIRLCFDGGYHVMDEAAHVCSDYRPTARQLWKPAVGIVELGIIGCKNLLPMKTVNGKGSTDAYTVAKYGSKWVRTRTVSDSLDPKWNEQYTWKVYDPCTVLTIGVFDSWGVYEVDGGKEATRQDLRIGKVRIRISTLETGKAYRNTYPLLMLVNGGVKKLGEIELAVRFVRTAPPLDFLHVYTQPLLPLMHHIKPLSLFQEDMLRNTAVKILAAHLSRSEPPLRPEIVRYMLDADTHTFSMRKVRANWLRIVNVVAGMVDVVRWVDDTRFWKNPTSTLLVHALVVMLIWFPDLIVPTLAFYLFVIGAWNYRFRSRAALPHFDPRLSLADAADRDELDEEFDVVPSNRPPEMVRLRYDKLRNVGARVQTILGEVAAQGEKMQALVTWRDPRATGIFVGLCFFVALVLYLVPTKMVAMASGFYYFRHPIFRDRKPSPVLNFFRRLPSLSDRLM.

The C2 1 domain maps to 1–112 (MATTRKLVVE…VGQGEEALIY (112 aa)). The tract at residues 136-249 (DEKPPPLKPT…PPQNQPDGED (114 aa)) is disordered. Basic and acidic residues-rich tracts occupy residues 153 to 170 (VEEK…ESKP) and 226 to 238 (ESDK…KPVE). C2 domains follow at residues 302 to 426 (TSEI…PQWY), 460 to 582 (TAGN…SRWL), and 617 to 745 (VCSD…RNTY). The Ca(2+) site is built by serine 338, aspartate 390, threonine 393, and serine 398. Helical transmembrane passes span 883 to 903 (VMLI…LFVI) and 989 to 1009 (ATGI…LVPT).

This sequence belongs to the MCTP family. Ca(2+) serves as cofactor. Expressed in the vascular tissues of roots, cotyledons and rosette leaves. Accumulates in roots meristems and shoot apical meristems (SAMs). Observed in flowers.

The protein localises to the endoplasmic reticulum membrane. May function as a signaling molecule by regulating the trafficking of other regulators. This is Multiple C2 domain and transmembrane region protein 16 from Arabidopsis thaliana (Mouse-ear cress).